The chain runs to 461 residues: CASP-like protein 4U1 (461 aa).

Residues M1–S239 form a disordered region. Over M1–E314 the chain is Cytoplasmic. Residues T7–P69 show a composition bias toward pro residues. Composition is skewed to low complexity over residues L116 to L126 and T135 to G155. Positions S193–L204 are enriched in pro residues. Residues T205–N221 show a composition bias toward low complexity. A helical membrane pass occupies residues L315–A335. Residues S336–R354 are Extracellular-facing. A helical membrane pass occupies residues Y355–I375. The Cytoplasmic segment spans residues R376 to Y392. A helical transmembrane segment spans residues C393–A413. Over S414–K431 the chain is Extracellular. Residues I432–I452 traverse the membrane as a helical segment. Over S453–L461 the chain is Cytoplasmic.

It belongs to the Casparian strip membrane proteins (CASP) family. Homodimer and heterodimers.

It localises to the cell membrane. This Sorghum bicolor (Sorghum) protein is CASP-like protein 4U1.